The sequence spans 339 residues: Annexin A2 (339 aa).

N-acetylserine is present on S2. The tract at residues 2 to 24 is S100A10-binding site; the sequence is STVHEILCKLSLEGDHSTPPSAY. Y24 carries the phosphotyrosine; by SRC modification. S26 carries the phosphoserine; by PKC modification. Annexin repeat units follow at residues 33–104 and 105–176; these read FDAE…GLLK and TPAQ…ALAK. At K49 the chain carries N6-acetyllysine; alternate. A Glycyl lysine isopeptide (Lys-Gly) (interchain with G-Cter in SUMO1); alternate cross-link involves residue K49. K49 is covalently cross-linked (Glycyl lysine isopeptide (Lys-Gly) (interchain with G-Cter in SUMO2); alternate). At K152 the chain carries N6-acetyllysine. Phosphoserine is present on S184. Annexin repeat units follow at residues 189 to 261 and 265 to 336; these read ELID…NLVQ and NKPL…YLCG. The residue at position 199 (Y199) is a Phosphotyrosine. N6-acetyllysine is present on K227.

Belongs to the annexin family. Heterotetramer containing 2 light chains of S100A10/p11 and 2 heavy chains of ANXA2/p36. Interacts with ATP1B1. Interacts with DYSF. Interacts with COCH. Interacts (via repeat Annexin 1) with PCSK9 (via the C-terminal domain); the interaction inhibits the degradation of LDLR. Interacts with CEACAM1 (via the cytoplasmic domain); this interaction is regulated by phosphorylation of CEACAM1. Interacts with APPL2 and APPL1; targets APPL2 to endosomes and acting in parallel to RAB5A. Interacts with S100A4. May interact with UBAP2. Interacts with PLEKHG4B; this interaction is required for PLEKHG4B localization to cell-cell adhesions. In terms of processing, ISGylated.

The protein resides in the secreted. The protein localises to the extracellular space. It is found in the extracellular matrix. It localises to the basement membrane. Its function is as follows. Calcium-regulated membrane-binding protein whose affinity for calcium is greatly enhanced by anionic phospholipids. It binds two calcium ions with high affinity. May be involved in heat-stress response. Inhibits PCSK9-enhanced LDLR degradation, probably reduces PCSK9 protein levels via a translational mechanism but also competes with LDLR for binding with PCSK9. Binds to endosomes damaged by phagocytosis of particulate wear debris and participates in endosomal membrane stabilization, thereby limiting NLRP3 inflammasome activation. Required for endothelial cell surface plasmin generation and may support fibrinolytic surveillance and neoangiogenesis. The sequence is that of Annexin A2 (ANXA2) from Canis lupus familiaris (Dog).